Here is a 209-residue protein sequence, read N- to C-terminus: Uracil phosphoribosyltransferase (209 aa).

5-phospho-alpha-D-ribose 1-diphosphate is bound by residues arginine 79, arginine 104, and 131 to 139 (DPMLATGGS). Residues valine 194 and 199–201 (GDA) contribute to the uracil site. Aspartate 200 is a 5-phospho-alpha-D-ribose 1-diphosphate binding site.

This sequence belongs to the UPRTase family. Requires Mg(2+) as cofactor.

The catalysed reaction is UMP + diphosphate = 5-phospho-alpha-D-ribose 1-diphosphate + uracil. The protein operates within pyrimidine metabolism; UMP biosynthesis via salvage pathway; UMP from uracil: step 1/1. Allosterically activated by GTP. Catalyzes the conversion of uracil and 5-phospho-alpha-D-ribose 1-diphosphate (PRPP) to UMP and diphosphate. The sequence is that of Uracil phosphoribosyltransferase from Clostridium botulinum (strain ATCC 19397 / Type A).